Reading from the N-terminus, the 130-residue chain is MTQVPDNLKYNRTHEWTRLEDDGTLTIGITDHAQSELGDLVFVETPTVGRHYDAEEACAVVESVKAASDIYAPVGGEVIEANSELQDSPELVNTDPYGEGWIMRIRPDDSDDLEQLLDPEDYQDLVADEE.

A Lipoyl-binding domain is found at 24–106 (TLTIGITDHA…YGEGWIMRIR (83 aa)). N6-lipoyllysine is present on Lys65. A disordered region spans residues 111-130 (DDLEQLLDPEDYQDLVADEE).

The protein belongs to the GcvH family. In terms of assembly, the glycine cleavage system is composed of four proteins: P, T, L and H. (R)-lipoate is required as a cofactor.

The glycine cleavage system catalyzes the degradation of glycine. The H protein shuttles the methylamine group of glycine from the P protein to the T protein. The polypeptide is Glycine cleavage system H protein (Alkalilimnicola ehrlichii (strain ATCC BAA-1101 / DSM 17681 / MLHE-1)).